A 231-amino-acid chain; its full sequence is Extracellular deoxyribonuclease (231 aa).

Positions 1–20 (MMIFRFVTTLAASLPLLTFA) are cleaved as a signal peptide.

It belongs to the EndA/NucM nuclease family.

It is found in the secreted. The polypeptide is Extracellular deoxyribonuclease (dns) (Vibrio cholerae serotype O1 (strain ATCC 39315 / El Tor Inaba N16961)).